The following is a 249-amino-acid chain: Probable transcriptional regulatory protein Tfu_2096 (249 aa).

It belongs to the TACO1 family.

The protein resides in the cytoplasm. The protein is Probable transcriptional regulatory protein Tfu_2096 of Thermobifida fusca (strain YX).